A 125-amino-acid polypeptide reads, in one-letter code: SOSS complex subunit C homolog (125 aa).

The disordered stretch occupies residues 43 to 77; the sequence is MPSPQLLGQPTVAPEFLPQGVGLPTNATPPRSAFN. Residues 67–77 show a composition bias toward polar residues; sequence TNATPPRSAFN.

Belongs to the SOSS-C family.

This chain is SOSS complex subunit C homolog, found in Drosophila persimilis (Fruit fly).